Reading from the N-terminus, the 516-residue chain is Glutamyl-tRNA(Gln) amidotransferase subunit B, mitochondrial (516 aa).

Belongs to the GatB/GatE family. GatB subfamily. In terms of assembly, subunit of the heterotrimeric GatCAB amidotransferase (AdT) complex, composed of A, B and C subunits.

The protein localises to the mitochondrion. The enzyme catalyses L-glutamyl-tRNA(Gln) + L-glutamine + ATP + H2O = L-glutaminyl-tRNA(Gln) + L-glutamate + ADP + phosphate + H(+). Its function is as follows. Allows the formation of correctly charged Gln-tRNA(Gln) through the transamidation of misacylated Glu-tRNA(Gln) in the mitochondria. The reaction takes place in the presence of glutamine and ATP through an activated gamma-phospho-Glu-tRNA(Gln). In Drosophila melanogaster (Fruit fly), this protein is Glutamyl-tRNA(Gln) amidotransferase subunit B, mitochondrial.